The sequence spans 773 residues: Transducin-like enhancer protein 4 (773 aa).

Disordered stretches follow at residues 1-22 (MIRDLSKMYPQTRHPAPHQPAQ), 140-162 (HGHGLPVPLTPHPSGLQPPAIPP), and 182-360 (LPIK…ASSL). Positions 1–136 (MIRDLSKMYP…AIIGQQLQAQ (136 aa)) are q domain. Positions 137–204 (HLSHGHGLPV…HQRDRDSIKS (68 aa)) are GP domain. Positions 183 to 202 (PIKDEKKHHDNDHQRDRDSI) are enriched in basic and acidic residues. Low complexity predominate over residues 203 to 212 (KSSSVSPSAS). A ccN domain region spans residues 205-274 (SSVSPSASFR…SPRGSPAHSP (70 aa)). 3 positions are modified to phosphoserine: Ser208, Ser212, and Ser222. Positions 215-252 (GAEKHRNSADYSSESKKQKTEEKEIAARYDSDGEKSDD) are enriched in basic and acidic residues. Position 237 is an N6-acetyllysine (Lys237). 4 positions are modified to phosphoserine: Ser245, Ser250, Ser269, and Ser273. Residues 273–289 (SPRENGLDKTRLLKKDA) are compositionally biased toward basic and acidic residues. Residues 275-452 (RENGLDKTRL…PGGKPAYSFH (178 aa)) are SP domain. Residue Lys281 is modified to N6-acetyllysine. Residues 290-305 (PISPASIASSSSTPSS) show a composition bias toward low complexity. Phosphoserine is present on Ser292. The span at 317–328 (TTPVSKSNTPTP) shows a compositional bias: polar residues. At Thr318 the chain carries Phosphothreonine. Ser321 and Ser323 each carry phosphoserine. Phosphothreonine occurs at positions 325, 327, 334, and 340. A Phosphoserine modification is found at Ser419. WD repeat units lie at residues 485–523 (NHGEVVCAVTISNPTRHVYTGGKGCVKVWDISHPGNKSP), 531–570 (NRDNYIRSCRLLPDGRTLIVGGEASTLSIWDLAAPTPRIK), 575–614 (SSAPACYALAISPDSKVCFSCCSDGNIAVWDLHNQTLVRQ), 617–656 (GHTDGASCIDISNDGTKLWTGGLDNTVRSWDLREGRQLQQ), 658–697 (DFTSQIFSLGYCPTGEWLAVGMENSNVEVLHVTKPDKYQL), 699–738 (LHESCVLSLKFAHCGKWFVSTGKDNLLNAWRTPYGASIFQ), and 740–773 (KESSSVLSCDISVDDKYIVTGSGDKKATVYEVIY).

Belongs to the WD repeat Groucho/TLE family. Homooligomer and heterooligomer with other family members. Interacts with PAX5. Interacts with LEF1, TCF7, TCF7L1 and TCF7L2. Interacts with ZNF703; TLE4 may mediate ZNF703 transcriptional repression. Interacts with SIX3 and SIX6. Interacts with PAX2. Interacts with TLE1. Phosphorylated. PAX5 binding increases phosphorylation. In terms of processing, ubiquitinated by XIAP/BIRC4. As to expression, in all tissues examined, mostly in brain, and muscle.

The protein resides in the nucleus. Its function is as follows. Transcriptional corepressor that binds to a number of transcription factors. Inhibits the transcriptional activation mediated by PAX5, and by CTNNB1 and TCF family members in Wnt signaling. The effects of full-length TLE family members may be modulated by association with dominant-negative AES. Essential for the transcriptional repressor activity of SIX3 during retina and lens development and for SIX3 transcriptional auto-repression. Involved in transcriptional repression of GNRHR and enhances MSX1-mediated transcriptional repression of CGA/alpha-GSU. This Homo sapiens (Human) protein is Transducin-like enhancer protein 4 (TLE4).